We begin with the raw amino-acid sequence, 124 residues long: uncharacterized protein (124 aa).

Belongs to the YciI family.

This is an uncharacterized protein from Rhizobium meliloti (strain 1021) (Ensifer meliloti).